The sequence spans 987 residues: Ephrin type-B receptor 4a (987 aa).

Residues 1-24 form the signal peptide; sequence MELFSRNVAAFWIILLEFLLGSVA. Topologically, residues 25–548 are extracellular; sequence EEEVLMNTKT…DSSSPLLVTG (524 aa). The Eph LBD domain maps to 26-205; the sequence is EEVLMNTKTE…FFKKCPALTR (180 aa). 2 disulfide bridges follow: cysteine 70–cysteine 187 and cysteine 104–cysteine 114. A disordered region spans residues 319–340; sequence DSADTPCTRPPSSPRSPVPQVN. A compositionally biased stretch (pro residues) spans 326 to 335; it reads TRPPSSPRSP. Fibronectin type-III domains follow at residues 328–438 and 442–536; these read PPSS…TSPN and LVSG…TLPD. A helical membrane pass occupies residues 549–569; the sequence is ILIAMGMLLLIIVIGAAIYCI. The Cytoplasmic portion of the chain corresponds to 570-987; sequence RKQNNYKDPE…QNKAPGNVLY (418 aa). One can recognise a Protein kinase domain in the interval 621 to 884; it reads VKIEEVIGAG…NIVSALDKLI (264 aa). ATP is bound by residues 627 to 635 and lysine 653; that span reads IGAGEFGEV. The active-site Proton acceptor is aspartate 746. One can recognise an SAM domain in the interval 914-978; the sequence is SSCGTVGDWL…LSSIEALGIQ (65 aa).

Belongs to the protein kinase superfamily. Tyr protein kinase family. Ephrin receptor subfamily.

Its subcellular location is the cell membrane. The enzyme catalyses L-tyrosyl-[protein] + ATP = O-phospho-L-tyrosyl-[protein] + ADP + H(+). In terms of biological role, receptor tyrosine kinase which binds promiscuously transmembrane ephrin-B family ligands residing on adjacent cells, leading to contact-dependent bidirectional signaling into neighboring cells. The signaling pathway downstream of the receptor is referred to as forward signaling while the signaling pathway downstream of the ephrin ligand is referred to as reverse signaling. Together with its cognate ligand/functional ligand EFNB2 is involved in the regulation of cell adhesion and cell migration, and plays a central role in heart morphogenesis, angiogenesis and blood vessel remodeling and permeability. EPHB4-mediated forward signaling controls cellular repulsion and segregation from EFNB2-expressing cells. Involved in somitogenesis. The chain is Ephrin type-B receptor 4a from Danio rerio (Zebrafish).